A 307-amino-acid chain; its full sequence is Serine/threonine-protein phosphatase 4 catalytic subunit (307 aa).

Asp-54, His-56, Asp-82, and Asn-114 together coordinate Mn(2+). The active-site Proton donor is His-115. Mn(2+) is bound by residues His-164 and His-238. Residue Leu-307 is modified to Leucine methyl ester.

It belongs to the PPP phosphatase family. PP-4 (PP-X) subfamily. As to quaternary structure, serine/threonine-protein phosphatase 4 (PP4) occurs in different assemblies of the catalytic and one or more regulatory subunits. Probably part of a PP4 PPP4C-PPP4R2-PPP4R3 complex containing Pp4-19C, PPP4R2r and flfl. Interacts with Ptpa; thereby mediating basal localization of the Miranda (Mira) complex; probably by dephosphorylation of Mira. Mn(2+) is required as a cofactor. In terms of processing, reversibly methyl esterified on Leu-307 by leucine carboxyl methyltransferase 1 (LCMT1) and protein phosphatase methylesterase 1 (PPME1). Carboxyl methylation influences the affinity of the catalytic subunit for the different regulatory subunits, thereby modulating the PP2A holoenzyme's substrate specificity, enzyme activity and cellular localization.

The protein resides in the cytoplasm. It localises to the nucleus. The protein localises to the cytoskeleton. Its subcellular location is the microtubule organizing center. It is found in the centrosome. The catalysed reaction is O-phospho-L-seryl-[protein] + H2O = L-seryl-[protein] + phosphate. It carries out the reaction O-phospho-L-threonyl-[protein] + H2O = L-threonyl-[protein] + phosphate. Functionally, protein phosphatase that regulates many processes such as microtubule organization at centrosomes. The probable PP4 complex Pp4-19C-PPP4R2r-flfl (PPP4C-PPP4R2-PPP4R3) is required to prevent caspase-induced cell death (in vitro). This is Serine/threonine-protein phosphatase 4 catalytic subunit (Pp4-19C) from Drosophila melanogaster (Fruit fly).